The primary structure comprises 141 residues: VLSAADKAHVKAFWTKIGGHAGEYGGEALERTFLSFPTTKTYFPHFDLSPGSAQVKAHGKKVGDALTLAVGHLDDLPGALSDLSDLHAHKLRVDPVNFKLLGHCVLVTLALHHPDAFTPAVHASLDKFITTVSTVLTSKYR.

Residues 1–141 (VLSAADKAHV…VSTVLTSKYR (141 aa)) form the Globin domain. S3 is subject to Phosphoserine. 2 positions are modified to N6-succinyllysine: K7 and K11. K16 carries the post-translational modification N6-acetyllysine; alternate. N6-succinyllysine; alternate is present on K16. Position 24 is a phosphotyrosine (Y24). The residue at position 35 (S35) is a Phosphoserine. N6-succinyllysine is present on K40. S49 is subject to Phosphoserine. H58 serves as a coordination point for O2. H87 is a heme b binding site. T108 is modified (phosphothreonine). Phosphoserine is present on S124. Phosphothreonine is present on residues T134 and T137. S138 carries the post-translational modification Phosphoserine.

Belongs to the globin family. In terms of assembly, heterotetramer of two alpha chains and two beta chains. As to expression, red blood cells.

Functionally, involved in oxygen transport from the lung to the various peripheral tissues. Hemopressin acts as an antagonist peptide of the cannabinoid receptor CNR1. Hemopressin-binding efficiently blocks cannabinoid receptor CNR1 and subsequent signaling. This is Hemoglobin subunit alpha (HBA) from Bradypus tridactylus (Pale-throated three-toed sloth).